Here is a 286-residue protein sequence, read N- to C-terminus: 3-hydroxyanthranilate 3,4-dioxygenase (286 aa).

The segment at 1 to 160 (MERRVRVKSW…SEQYRTGKPN (160 aa)) is domain A (catalytic). Arginine 43 is a binding site for O2. Fe cation-binding residues include histidine 47, glutamate 53, and histidine 91. Residue glutamate 53 participates in substrate binding. Substrate-binding residues include arginine 95 and glutamate 105. Residues 161–177 (PDQLLKELPFPLNTRSI) form a linker region. Residues 178–286 (MKPMSLKAWL…QDPARKKPWW (109 aa)) are domain B.

The protein belongs to the 3-HAO family. As to quaternary structure, monomer. The cofactor is Fe(2+).

Its subcellular location is the cytoplasm. It localises to the cytosol. The catalysed reaction is 3-hydroxyanthranilate + O2 = (2Z,4Z)-2-amino-3-carboxymuconate 6-semialdehyde. The protein operates within cofactor biosynthesis; NAD(+) biosynthesis; quinolinate from L-kynurenine: step 3/3. Its function is as follows. Catalyzes the oxidative ring opening of 3-hydroxyanthranilate to 2-amino-3-carboxymuconate semialdehyde, which spontaneously cyclizes to quinolinate. The sequence is that of 3-hydroxyanthranilate 3,4-dioxygenase (Haao) from Mus musculus (Mouse).